The primary structure comprises 569 residues: AA9 family lytic polysaccharide monooxygenase A (569 aa).

The first 16 residues, 1 to 16, serve as a signal peptide directing secretion; that stretch reads MRIFSLALGFLPLVAG. Residues histidine 17 and histidine 99 each contribute to the Cu(2+) site. Cysteine 59 and cysteine 189 are joined by a disulfide. Residue asparagine 112 is glycosylated (N-linked (GlcNAc...) asparagine). Residues histidine 174 and glutamine 184 each coordinate O2. Tyrosine 186 is a Cu(2+) binding site. Asparagine 244 and asparagine 381 each carry an N-linked (GlcNAc...) asparagine glycan. The segment covering 399-424 has biased composition (low complexity); that stretch reads AADATATATATTEDAEATTAAEAAAT. Positions 399–439 are disordered; sequence AADATATATATTEDAEATTAAEAAATSGAGRPGRGHGHGRG. An N-linked (GlcNAc...) asparagine glycan is attached at asparagine 472.

This sequence belongs to the polysaccharide monooxygenase AA9 family. Requires Cu(2+) as cofactor.

It localises to the secreted. The catalysed reaction is [(1-&gt;4)-beta-D-glucosyl]n+m + reduced acceptor + O2 = 4-dehydro-beta-D-glucosyl-[(1-&gt;4)-beta-D-glucosyl]n-1 + [(1-&gt;4)-beta-D-glucosyl]m + acceptor + H2O.. Functionally, lytic polysaccharide monooxygenase (LPMO) that depolymerizes crystalline and amorphous polysaccharides via the oxidation of scissile alpha- or beta-(1-4)-glycosidic bonds, yielding C4 oxidation products. Catalysis by LPMOs requires the reduction of the active-site copper from Cu(II) to Cu(I) by a reducing agent and H(2)O(2) or O(2) as a cosubstrate. The sequence is that of AA9 family lytic polysaccharide monooxygenase A from Emericella nidulans (strain FGSC A4 / ATCC 38163 / CBS 112.46 / NRRL 194 / M139) (Aspergillus nidulans).